Reading from the N-terminus, the 715-residue chain is Methionine--tRNA ligase (715 aa).

Positions 17-27 (PYANGPIHLGH) match the 'HIGH' region motif. Residues Cys148, Cys151, Cys161, and Cys164 each contribute to the Zn(2+) site. A 'KMSKS' region motif is present at residues 359-363 (KMSKS). Lys362 is a binding site for ATP. The 102-residue stretch at 614–715 (DLSKVELRVG…KDAKPGDRLK (102 aa)) folds into the tRNA-binding domain.

It belongs to the class-I aminoacyl-tRNA synthetase family. MetG type 1 subfamily. As to quaternary structure, homodimer. Zn(2+) is required as a cofactor.

The protein resides in the cytoplasm. The catalysed reaction is tRNA(Met) + L-methionine + ATP = L-methionyl-tRNA(Met) + AMP + diphosphate. Is required not only for elongation of protein synthesis but also for the initiation of all mRNA translation through initiator tRNA(fMet) aminoacylation. The polypeptide is Methionine--tRNA ligase (Leptospira interrogans serogroup Icterohaemorrhagiae serovar Lai (strain 56601)).